Consider the following 427-residue polypeptide: Glucose-6-phosphate isomerase (427 aa).

Glu281 functions as the Proton donor in the catalytic mechanism. Catalysis depends on residues His302 and Lys417.

This sequence belongs to the GPI family.

The protein localises to the cytoplasm. It catalyses the reaction alpha-D-glucose 6-phosphate = beta-D-fructose 6-phosphate. Its pathway is carbohydrate biosynthesis; gluconeogenesis. It participates in carbohydrate degradation; glycolysis; D-glyceraldehyde 3-phosphate and glycerone phosphate from D-glucose: step 2/4. Its function is as follows. Catalyzes the reversible isomerization of glucose-6-phosphate to fructose-6-phosphate. The chain is Glucose-6-phosphate isomerase from Mycoplasmopsis pulmonis (strain UAB CTIP) (Mycoplasma pulmonis).